Consider the following 477-residue polypeptide: Peroxisome proliferator-activated receptor gamma (477 aa).

Position 87 is a phosphoserine; by MAPK (S87). Positions 110–184 form a DNA-binding region, nuclear receptor; the sequence is AIECRVCGDK…VGMSHNAIRF (75 aa). 2 NR C4-type zinc fingers span residues 113–133 and 150–172; these read CRVC…CEGC and CDLN…FQKC. A disordered region spans residues 231-281; the sequence is TKAKAPGHPDGQSHRQNSRGYTRHELADDGGGSDQGAVREPRAEQGGGDSN. In terms of domain architecture, NR LBD spans 252–475; that stretch reads TRHELADDGG…HPLLQEIYKD (224 aa). A 9aaTAD motif is present at residues 467 to 475; it reads PLLQEIYKD.

It belongs to the nuclear hormone receptor family. NR1 subfamily. As to quaternary structure, heterodimer with the retinoid X receptor. In terms of tissue distribution, expressed mainly in adipose tissue and kidney.

The protein localises to the nucleus. The protein resides in the cytoplasm. Receptor that binds peroxisome proliferators such as hypolipidemic drugs and fatty acids. Once activated by a ligand, the receptor binds to a promoter element in the gene for acyl-CoA oxidase and activates its transcription. It therefore controls the peroxisomal beta-oxidation pathway of fatty acids. Key regulator of adipocyte differentiation and glucose homeostasis. May play a role in the regulation of circadian rhythm. The chain is Peroxisome proliferator-activated receptor gamma (pparg) from Xenopus laevis (African clawed frog).